A 129-amino-acid chain; its full sequence is uncharacterized protein (129 aa).

Low complexity predominate over residues 85-108; sequence SSAADSDDSSSCSECDSDALLSDD. A disordered region spans residues 85 to 110; sequence SSAADSDDSSSCSECDSDALLSDDGP.

This is an uncharacterized protein from Microplitis demolitor (Parasitoid wasp).